The sequence spans 201 residues: Putative ankyrin repeat protein R868 (201 aa).

ANK repeat units follow at residues 125 to 154 and 156 to 188; these read YENN…NCYF and KAKK…DYNF.

The protein is Putative ankyrin repeat protein R868 of Acanthamoeba polyphaga (Amoeba).